A 237-amino-acid polypeptide reads, in one-letter code: Cell division cycle-associated protein 4 (237 aa).

Positions 26 to 73 constitute an SERTA domain; the sequence is YSLQRQSLLDMSLVKLQLCHMLVEPNLCRSVLIANTVRQIQEEMSQDG.

In terms of tissue distribution, expressed preferentially in hematopoietic progenitors and mature blood cells. Expressed at low levels in the heart, lung, spleen, and thymus and at a higher level in muscle.

The protein localises to the nucleus. Its function is as follows. May participate in the regulation of cell proliferation through the E2F/RB pathway. May be involved in molecular regulation of hematopoietic stem cells and progenitor cell lineage commitment and differentiation. In Mus musculus (Mouse), this protein is Cell division cycle-associated protein 4 (Cdca4).